Here is a 148-residue protein sequence, read N- to C-terminus: UPF0178 protein SH2212 (148 aa).

The protein belongs to the UPF0178 family.

The protein is UPF0178 protein SH2212 of Staphylococcus haemolyticus (strain JCSC1435).